A 350-amino-acid chain; its full sequence is D-alanine--D-alanine ligase (350 aa).

The ATP-grasp domain maps to 134 to 337 (KIFAAQRGVK…LPKKHSIKVS (204 aa)). ATP is bound at residue 160-212 (IAYPIILKPARLGSSIGVSVINEEKELDYGRDLAFEYDDTIIAESFKSGVKEY). Residues Asp289, Glu301, and Asn303 each contribute to the Mg(2+) site.

This sequence belongs to the D-alanine--D-alanine ligase family. Mg(2+) serves as cofactor. Requires Mn(2+) as cofactor.

It localises to the cytoplasm. The enzyme catalyses 2 D-alanine + ATP = D-alanyl-D-alanine + ADP + phosphate + H(+). It functions in the pathway cell wall biogenesis; peptidoglycan biosynthesis. In terms of biological role, cell wall formation. The chain is D-alanine--D-alanine ligase from Helicobacter hepaticus (strain ATCC 51449 / 3B1).